A 247-amino-acid polypeptide reads, in one-letter code: MNTQLEVCIDNIESLHNAIAGGPTRIELCSSLALGGLTPSYGFMQQAAKHSTIPVYAMIRPRQGDFFYSEEEIELMRWDIEAAKQAGLNGVVLGVLTQDGNIHMPYATALCEFAQALGLGVTFHRAFDQCRDAEKALEEVISLGCERILTSGLAPSAPQGIDVLKALVEQAQGRIALMAGAGVNADNVGQIVEQTKVTEVHLSGKTTRPSHMTFIAEQSKMGAADVDDFSIPVTNTDAIANMVTALN.

Belongs to the CutC family.

The protein localises to the cytoplasm. The chain is PF03932 family protein CutC from Vibrio campbellii (strain ATCC BAA-1116).